We begin with the raw amino-acid sequence, 241 residues long: Probable 2-phosphosulfolactate phosphatase (241 aa).

The protein belongs to the ComB family. Mg(2+) is required as a cofactor.

It catalyses the reaction (2R)-O-phospho-3-sulfolactate + H2O = (2R)-3-sulfolactate + phosphate. The protein is Probable 2-phosphosulfolactate phosphatase of Caldanaerobacter subterraneus subsp. tengcongensis (strain DSM 15242 / JCM 11007 / NBRC 100824 / MB4) (Thermoanaerobacter tengcongensis).